An 80-amino-acid chain; its full sequence is Large ribosomal subunit protein bL31B (80 aa).

This sequence belongs to the bacterial ribosomal protein bL31 family. Type B subfamily. In terms of assembly, part of the 50S ribosomal subunit.

The chain is Large ribosomal subunit protein bL31B from Streptococcus pneumoniae serotype 2 (strain D39 / NCTC 7466).